The primary structure comprises 2974 residues: Mediator of RNA polymerase II transcription subunit 13 (2974 aa).

4 stretches are compositionally biased toward basic and acidic residues: residues 284–299 (EKEPENVTEERQKTPE), 340–367 (MFEPDLRQDKPKEETAAEKEKRMAAREV), 374–390 (RREERRREMEKQRRADD), and 624–633 (SREKRKEYQP). 12 disordered regions span residues 284 to 309 (EKEPENVTEERQKTPEAEPPAPPQTT), 340 to 394 (MFEP…NLED), 624 to 654 (SREKRKEYQPYHRKRPAKSVKEKKKKAKRKV), 677 to 749 (FNAW…FADI), 764 to 801 (LYNPAGGDIEEGDETSNESPDEKTPEGSPNGSPRPKEE), 1032 to 1063 (PHGSFDHDSEPEFDEQRTGLGEGTSDQYQDGE), 1099 to 1134 (GMLSPPASNEMPKGGPLSVGPASIESQGLNQIYPTP), 1140 to 1159 (LQADASQAHSPSIGGKFRST), 1281 to 1342 (TLAR…TPTY), 1416 to 1486 (QGGL…DATA), 2052 to 2078 (ELKKADEHPAPPSTQSENSEGNAATPA), and 2247 to 2309 (QDEA…PAGM). Residues 351-396 (KEETAAEKEKRMAAREVRRLRRQRREERRREMEKQRRADDNLEDYD) adopt a coiled-coil conformation. Composition is skewed to basic residues over residues 634–654 (YHRKRPAKSVKEKKKKAKRKV) and 677–688 (FNAWKQKKKGPP). Positions 689-717 (PKKDLAKKEAAADKDKDKDKEKDKEKDKD) are enriched in basic and acidic residues. A compositionally biased stretch (basic and acidic residues) spans 1035 to 1048 (SFDHDSEPEFDEQR). 2 stretches are compositionally biased toward polar residues: residues 1122–1134 (IESQGLNQIYPTP) and 1140–1149 (LQADASQAHS). 2 stretches are compositionally biased toward pro residues: residues 1284–1299 (RPPPGATSPLPPPTPM) and 1326–1340 (PAYPPTPGPYPPTTP). The span at 1443–1464 (IRNTDAPNDPTVSKLQSAVSRN) shows a compositional bias: polar residues. Residues 1473-1486 (AATSIPTATDDATA) are compositionally biased toward low complexity. Over residues 2064–2073 (STQSENSEGN) the composition is skewed to polar residues. Positions 2220–2301 (AVEGRLKRQK…EQYPAEESQA (82 aa)) form a coiled coil. Composition is skewed to basic and acidic residues over residues 2247 to 2258 (QDEADKREKMDE) and 2281 to 2292 (EEKKRNKQKENE). The interval 2347–2974 (WKQRDTRVQN…LYHSVARLLV (628 aa)) is mediates transcriptional repression.

This sequence belongs to the Mediator complex subunit 13 family. Component of the Mediator complex.

The protein localises to the nucleus. In terms of biological role, component of the Mediator complex, a coactivator involved in regulated gene transcription of nearly all RNA polymerase II-dependent genes. Mediator functions as a bridge to convey information from gene-specific regulatory proteins to the basal RNA polymerase II transcription machinery. Mediator is recruited to promoters by direct interactions with regulatory proteins and serves as a scaffold for the assembly of a functional preinitiation complex with RNA polymerase II and the general transcription factors. This Caenorhabditis briggsae protein is Mediator of RNA polymerase II transcription subunit 13 (let-19).